A 326-amino-acid chain; its full sequence is DNA-directed RNA polymerase subunit alpha (326 aa).

Residues 1–231 (MQTALLKPKI…DQLSVFAALE (231 aa)) form an alpha N-terminal domain (alpha-NTD) region. Residues 247 to 326 (IDPILLRPVD…ENWPPAGLDK (80 aa)) form an alpha C-terminal domain (alpha-CTD) region.

The protein belongs to the RNA polymerase alpha chain family. As to quaternary structure, homodimer. The RNAP catalytic core consists of 2 alpha, 1 beta, 1 beta' and 1 omega subunit. When a sigma factor is associated with the core the holoenzyme is formed, which can initiate transcription.

The catalysed reaction is RNA(n) + a ribonucleoside 5'-triphosphate = RNA(n+1) + diphosphate. Its function is as follows. DNA-dependent RNA polymerase catalyzes the transcription of DNA into RNA using the four ribonucleoside triphosphates as substrates. This is DNA-directed RNA polymerase subunit alpha from Cupriavidus pinatubonensis (strain JMP 134 / LMG 1197) (Cupriavidus necator (strain JMP 134)).